A 947-amino-acid polypeptide reads, in one-letter code: Altered inheritance of mitochondria protein 3 (947 aa).

Disordered stretches follow at residues 1 to 334 (MGFW…LLPQ), 354 to 810 (MSST…QDEV), and 824 to 904 (RKTN…KSLE). Over residues 36-54 (ASKKHYNNSKARRERKSGK) the composition is skewed to basic residues. 3 positions are modified to phosphoserine: Ser57, Ser58, and Ser64. Over residues 59 to 69 (DEEYDSEDEME) the composition is skewed to acidic residues. The segment covering 70-84 (YERKPTDIRSLKDPK) has biased composition (basic and acidic residues). 2 stretches are compositionally biased toward low complexity: residues 93-105 (PGQK…QQQQ) and 130-163 (QSQY…GVVP). Over residues 177 to 255 (GSNSNATSYQ…YVSHGSTNLG (79 aa)) the composition is skewed to polar residues. Composition is skewed to low complexity over residues 256–289 (QSQF…QQGQ) and 313–334 (QQQQ…LLPQ). The segment covering 354 to 367 (MSSTTNMQDSNPSY) has biased composition (polar residues). Over residues 379–395 (GGQPPVPVRMQPQPPQP) the composition is skewed to pro residues. The span at 466–475 (IQPNTTSSAA) shows a compositional bias: polar residues. Ser476 bears the Phosphoserine mark. Residues 488-502 (DNERNSGNKENDEST) are compositionally biased toward basic and acidic residues. The segment covering 633 to 644 (VPQSKPQSQSQF) has biased composition (polar residues). Low complexity predominate over residues 667-676 (SQSSNSSDSS). Residue Thr729 is modified to Phosphothreonine. Positions 749-759 (DSSKDANKYEK) are enriched in basic and acidic residues. Positions 763–774 (PVTSSIQAQQST) are enriched in polar residues. Thr861 carries the phosphothreonine modification. The span at 862 to 879 (PPRPPPSRSSPKKVPPVV) shows a compositional bias: pro residues. The span at 888–899 (KKPPVVPKKKPL) shows a compositional bias: basic residues.

Belongs to the AIM3 family. In terms of assembly, interacts with RVS167.

The protein resides in the membrane raft. The sequence is that of Altered inheritance of mitochondria protein 3 (AIM3) from Saccharomyces cerevisiae (strain ATCC 204508 / S288c) (Baker's yeast).